Consider the following 484-residue polypeptide: Glycogen synthase (484 aa).

K15 contacts ADP-alpha-D-glucose.

The protein belongs to the glycosyltransferase 1 family. Bacterial/plant glycogen synthase subfamily.

It carries out the reaction [(1-&gt;4)-alpha-D-glucosyl](n) + ADP-alpha-D-glucose = [(1-&gt;4)-alpha-D-glucosyl](n+1) + ADP + H(+). The protein operates within glycan biosynthesis; glycogen biosynthesis. In terms of biological role, synthesizes alpha-1,4-glucan chains using ADP-glucose. The sequence is that of Glycogen synthase from Geotalea daltonii (strain DSM 22248 / JCM 15807 / FRC-32) (Geobacter daltonii).